The primary structure comprises 110 residues: MTTPHSIAESTDPEVFPANNRHLTVSYASRYPEYTRIPAITLKGQWLEDAGFTTGTQVDVRVMNGCIVLTAQQPQPEESELMQSLRQVSKLSARKQKQVQAFIDVMAGSK.

In terms of domain architecture, SpoVT-AbrB spans 29-74; sequence SRYPEYTRIPAITLKGQWLEDAGFTTGTQVDVRVMNGCIVLTAQQP.

This sequence belongs to the SymE family.

The protein localises to the cytoplasm. Functionally, involved in the degradation and recycling of damaged RNA. It is itself a target for degradation by the ATP-dependent protease Lon. This Salmonella paratyphi C (strain RKS4594) protein is Endoribonuclease SymE.